Consider the following 154-residue polypeptide: MRIIGIDPGLARVGYGIIDEIEGKKIMIDCGIIETKSTQKEEERLVEISNDLSSIIKKWNPNSAAVEKFFFYRSSTTISVVQARGVIMMTLGKYKLPIQEFPPMQIKLAVTGYGHSDKNDVLNSVMHELNVTSPPKPDDAADALAIALTGIYLK.

Active-site residues include D7, E67, and D139. 3 residues coordinate Mg(2+): D7, E67, and D139.

Belongs to the RuvC family. In terms of assembly, homodimer which binds Holliday junction (HJ) DNA. The HJ becomes 2-fold symmetrical on binding to RuvC with unstacked arms; it has a different conformation from HJ DNA in complex with RuvA. In the full resolvosome a probable DNA-RuvA(4)-RuvB(12)-RuvC(2) complex forms which resolves the HJ. The cofactor is Mg(2+).

Its subcellular location is the cytoplasm. The enzyme catalyses Endonucleolytic cleavage at a junction such as a reciprocal single-stranded crossover between two homologous DNA duplexes (Holliday junction).. In terms of biological role, the RuvA-RuvB-RuvC complex processes Holliday junction (HJ) DNA during genetic recombination and DNA repair. Endonuclease that resolves HJ intermediates. Cleaves cruciform DNA by making single-stranded nicks across the HJ at symmetrical positions within the homologous arms, yielding a 5'-phosphate and a 3'-hydroxyl group; requires a central core of homology in the junction. The consensus cleavage sequence is 5'-(A/T)TT(C/G)-3'. Cleavage occurs on the 3'-side of the TT dinucleotide at the point of strand exchange. HJ branch migration catalyzed by RuvA-RuvB allows RuvC to scan DNA until it finds its consensus sequence, where it cleaves and resolves the cruciform DNA. This is Crossover junction endodeoxyribonuclease RuvC from Prochlorococcus marinus (strain NATL2A).